A 397-amino-acid chain; its full sequence is Elongation factor Tu (397 aa).

A tr-type G domain is found at 10-207 (KPHVNVGTVG…AIDAYVPDPV (198 aa)). The G1 stretch occupies residues 19 to 26 (GHIDHGKT). 19 to 26 (GHIDHGKT) serves as a coordination point for GTP. Thr-26 provides a ligand contact to Mg(2+). Residues 60–64 (GITIA) are G2. Residues 81–84 (DCPG) are G3. GTP contacts are provided by residues 81–85 (DCPGH) and 136–139 (NKVD). The G4 stretch occupies residues 136–139 (NKVD). A G5 region spans residues 174–176 (SAL).

This sequence belongs to the TRAFAC class translation factor GTPase superfamily. Classic translation factor GTPase family. EF-Tu/EF-1A subfamily. Monomer.

It localises to the cytoplasm. It catalyses the reaction GTP + H2O = GDP + phosphate + H(+). GTP hydrolase that promotes the GTP-dependent binding of aminoacyl-tRNA to the A-site of ribosomes during protein biosynthesis. The chain is Elongation factor Tu from Syntrophobacter fumaroxidans (strain DSM 10017 / MPOB).